We begin with the raw amino-acid sequence, 358 residues long: Ribosomal RNA-processing protein 8 (358 aa).

The disordered stretch occupies residues 1-81 (MKPFEVPPWE…PQDSSDDDYE (81 aa)). Residues 30 to 44 (AKKKPKKKKPKKKKA) show a composition bias toward basic residues. Phosphoserine occurs at positions 75 and 76. S-adenosyl-L-methionine contacts are provided by His-185, Gly-220, Asp-238, and Cys-267.

The protein belongs to the methyltransferase superfamily. RRP8 family.

The protein localises to the nucleus. It is found in the nucleolus. Probable methyltransferase required to silence rDNA. The chain is Ribosomal RNA-processing protein 8 from Drosophila melanogaster (Fruit fly).